Consider the following 157-residue polypeptide: Protein Smg homolog (157 aa).

Belongs to the Smg family.

This is Protein Smg homolog from Xanthomonas oryzae pv. oryzae (strain MAFF 311018).